The primary structure comprises 156 residues: Small ribosomal subunit protein uS7 (156 aa).

The protein belongs to the universal ribosomal protein uS7 family. In terms of assembly, part of the 30S ribosomal subunit. Contacts proteins S9 and S11.

Its function is as follows. One of the primary rRNA binding proteins, it binds directly to 16S rRNA where it nucleates assembly of the head domain of the 30S subunit. Is located at the subunit interface close to the decoding center, probably blocks exit of the E-site tRNA. The protein is Small ribosomal subunit protein uS7 of Rhizobium etli (strain ATCC 51251 / DSM 11541 / JCM 21823 / NBRC 15573 / CFN 42).